Consider the following 116-residue polypeptide: Large ribosomal subunit protein uL22c (116 aa).

It belongs to the universal ribosomal protein uL22 family. As to quaternary structure, part of the 50S ribosomal subunit.

The protein localises to the plastid. It localises to the chloroplast. In terms of biological role, this protein binds specifically to 23S rRNA. Functionally, the globular domain of the protein is located near the polypeptide exit tunnel on the outside of the subunit, while an extended beta-hairpin is found that lines the wall of the exit tunnel in the center of the 70S ribosome. In Psilotum nudum (Whisk fern), this protein is Large ribosomal subunit protein uL22c (rpl22).